Consider the following 208-residue polypeptide: Coiled-coil domain-containing protein 25 (208 aa).

Over 1–105 (MVFYFTSSSV…SNLKKTADMD (105 aa)) the chain is Extracellular. A DNA-binding region spans residues 21–25 (KDKYE). At lysine 23 the chain carries N6-acetyllysine. The helical transmembrane segment at 106–122 (VGQIGFHRQKDVKIVTV) threads the bilayer. A coiled-coil region spans residues 117–187 (VKIVTVEKKV…REMDELRSYS (71 aa)). At 123 to 208 (EKKVNEILNR…QDGNDSDEFM (86 aa)) the chain is on the cytoplasmic side. Basic and acidic residues predominate over residues 145–184 (EAEKECRDHEERNEKKAQIQEMKRREKEEMKKKREMDELR). Positions 145 to 208 (EAEKECRDHE…QDGNDSDEFM (64 aa)) are disordered. Position 204 is a phosphoserine (serine 204).

Belongs to the CCDC25 family. As to quaternary structure, interacts (via cytoplasmic region) with ILK.

Its subcellular location is the cell membrane. It localises to the endomembrane system. Functionally, transmembrane receptor that senses neutrophil extracellular traps (NETs) and triggers the ILK-PARVB pathway to enhance cell motility. NETs are mainly composed of DNA fibers and are released by neutrophils to bind pathogens during inflammation. Formation of NETs is also associated with cancer metastasis, NET-DNA acting as a chemotactic factor to attract cancer cells. Specifically binds NETs on its extracellular region, in particular the 8-OHdG-enriched DNA present in NETs, and recruits ILK, initiating the ILK-PARVB cascade to induce cytoskeleton rearrangement and directional migration of cells. This Bos taurus (Bovine) protein is Coiled-coil domain-containing protein 25.